The sequence spans 80 residues: DNA-directed RNA polymerase RPB10 homolog (80 aa).

4 residues coordinate Zn(2+): Cys7, Cys10, Cys65, and Cys66.

This sequence belongs to the archaeal RpoN/eukaryotic RPB10 RNA polymerase subunit family. In terms of assembly, part of the viral DNA-directed RNA polymerase that consists of 8 polII-like subunits (RPB1, RPB2, RPB3, RPB5, RPB6, RPB7, RPB9, RPB10), a capping enzyme and a termination factor.

Its subcellular location is the host cytoplasm. Functionally, component of the DNA-directed RNA polymerase (RNAP) that catalyzes the transcription in the cytoplasm of viral DNA into RNA using the four ribonucleoside triphosphates as substrates. The sequence is that of DNA-directed RNA polymerase RPB10 homolog from African swine fever virus (isolate Pig/Kenya/KEN-50/1950) (ASFV).